Reading from the N-terminus, the 321-residue chain is Calcium-regulated beta-propeller protein CarP (321 aa).

An N-terminal signal peptide occupies residues 1 to 42 (MTIHAQTPEPFSMSRAFTPRRLLLAVLLVALSALVLLGQSFR).

It belongs to the YjiK family.

The protein localises to the cell inner membrane. Its function is as follows. Plays a role in intracellular Ca(2+) homeostasis. Involved in modulating Ca(2+)-induced swarming motility and pyocyanine production. Plays a role in regulating virulence in a Ca(2+)-dependent manner. Involved in cell protection against oxidative stress in the presence of elevated Ca(2+). This Pseudomonas aeruginosa (strain ATCC 15692 / DSM 22644 / CIP 104116 / JCM 14847 / LMG 12228 / 1C / PRS 101 / PAO1) protein is Calcium-regulated beta-propeller protein CarP.